Consider the following 598-residue polypeptide: UvrABC system protein C (598 aa).

Positions 13–91 (TLPGVYRMVD…IKGLKPRFNI (79 aa)) constitute a GIY-YIG domain. Residues 200 to 235 (TALTEEITAQMNAAAENLDFETAAYLRDRLRMLATV) enclose the UVR domain.

This sequence belongs to the UvrC family. In terms of assembly, interacts with UvrB in an incision complex.

The protein localises to the cytoplasm. Its function is as follows. The UvrABC repair system catalyzes the recognition and processing of DNA lesions. UvrC both incises the 5' and 3' sides of the lesion. The N-terminal half is responsible for the 3' incision and the C-terminal half is responsible for the 5' incision. The polypeptide is UvrABC system protein C (Thiobacillus denitrificans (strain ATCC 25259 / T1)).